Consider the following 82-residue polypeptide: Conotoxin Tx6.6 (82 aa).

The signal sequence occupies residues 1-19; that stretch reads MKLTCVMIVAVLFLTAWTL. Positions 20–51 are excised as a propeptide; the sequence is VMADDSNNGLANLFSKLRDEMEDPEGSKLEKK. 3 cysteine pairs are disulfide-bonded: Cys53–Cys71, Cys60–Cys76, and Cys70–Cys81. Ala82 carries the alanine amide; partial modification.

The protein belongs to the O1 superfamily. In terms of tissue distribution, expressed by the venom duct.

The protein localises to the secreted. Its function is as follows. Omega-conotoxins act at presynaptic membranes, they bind and block voltage-gated calcium channels (Cav). This chain is Conotoxin Tx6.6, found in Conus textile (Cloth-of-gold cone).